Reading from the N-terminus, the 375-residue chain is Queuine tRNA-ribosyltransferase (375 aa).

Aspartate 93 acts as the Proton acceptor in catalysis. Residues 93 to 97, aspartate 147, glutamine 191, and glycine 218 each bind substrate; that span reads DSGGF. Residues 249–255 are RNA binding; sequence GVGTPLD. Aspartate 268 acts as the Nucleophile in catalysis. An RNA binding; important for wobble base 34 recognition region spans residues 273–277; it reads TRNAR. 4 residues coordinate Zn(2+): cysteine 306, cysteine 308, cysteine 311, and histidine 337.

It belongs to the queuine tRNA-ribosyltransferase family. In terms of assembly, homodimer. Within each dimer, one monomer is responsible for RNA recognition and catalysis, while the other monomer binds to the replacement base PreQ1. It depends on Zn(2+) as a cofactor.

The catalysed reaction is 7-aminomethyl-7-carbaguanine + guanosine(34) in tRNA = 7-aminomethyl-7-carbaguanosine(34) in tRNA + guanine. The protein operates within tRNA modification; tRNA-queuosine biosynthesis. Functionally, catalyzes the base-exchange of a guanine (G) residue with the queuine precursor 7-aminomethyl-7-deazaguanine (PreQ1) at position 34 (anticodon wobble position) in tRNAs with GU(N) anticodons (tRNA-Asp, -Asn, -His and -Tyr). Catalysis occurs through a double-displacement mechanism. The nucleophile active site attacks the C1' of nucleotide 34 to detach the guanine base from the RNA, forming a covalent enzyme-RNA intermediate. The proton acceptor active site deprotonates the incoming PreQ1, allowing a nucleophilic attack on the C1' of the ribose to form the product. After dissociation, two additional enzymatic reactions on the tRNA convert PreQ1 to queuine (Q), resulting in the hypermodified nucleoside queuosine (7-(((4,5-cis-dihydroxy-2-cyclopenten-1-yl)amino)methyl)-7-deazaguanosine). The chain is Queuine tRNA-ribosyltransferase from Nitratidesulfovibrio vulgaris (strain DP4) (Desulfovibrio vulgaris).